A 171-amino-acid chain; its full sequence is Transcription factor E (171 aa).

The HTH TFE/IIEalpha-type domain occupies 1-81 (MLNLAKELVG…YWKVNVNQIN (81 aa)).

Belongs to the TFE family. As to quaternary structure, monomer. Interaction with RNA polymerase subunits RpoF and RpoE is necessary for Tfe stimulatory transcription activity. Able to interact with Tbp and RNA polymerase in the absence of DNA promoter. Interacts both with the preinitiation and elongation complexes.

Functionally, transcription factor that plays a role in the activation of archaeal genes transcribed by RNA polymerase. Facilitates transcription initiation by enhancing TATA-box recognition by TATA-box-binding protein (Tbp), and transcription factor B (Tfb) and RNA polymerase recruitment. Not absolutely required for transcription in vitro, but particularly important in cases where Tbp or Tfb function is not optimal. It dynamically alters the nucleic acid-binding properties of RNA polymerases by stabilizing the initiation complex and destabilizing elongation complexes. Seems to translocate with the RNA polymerase following initiation and acts by binding to the non template strand of the transcription bubble in elongation complexes. The sequence is that of Transcription factor E from Sulfolobus acidocaldarius (strain ATCC 33909 / DSM 639 / JCM 8929 / NBRC 15157 / NCIMB 11770).